The following is a 527-amino-acid chain: MADSRDPASDQMKLWKEQRAAQKPDVLTTGGGNPIGDKLNVMTAGPRGPLLVQDVVFTDEMAHFDRERIPERVVHAKGAGAFGYFEVTHDITKYSKAKVFEHIGKRTPIAVRFSTVAGESGSADTVRDPRGFAVKFYTEDGNWDLVGNNTPIFFIRDAILFPSFIHSQKRNPQTHLKDPDMVWDFWSLRPESLHQVSFLFSDRGIPDGHRHMNGYGSHTFKLVNAAGEAVYCKFHYKTDQGIKNLSVEDAARLSHEDPDYGLRDLFNAIATGNYPSWTFYIQVMTFSQAETFPFNPFDLTKIWPHQDYPLIPVGKLVLNRNPVNYFAEVEQMAFDPSNMPPGIEPSPDKMLQGRLFAYPDTHRHRLGPNYLQIPVNCPFRARVANYQRDGPMCMLDNQGGAPNYYPNSFSAPEQQRCVLEHSSQCSPDVQRFNSANEDNVTQVRTFYLKVLGEEERKRLCENIAGHLKDAQLFIQKKAVKNFSDVHPDYGARIQALLDKYNAEKPKNAIHTFMQHGSHLAAREKANL.

Residues 1 to 22 are compositionally biased toward basic and acidic residues; it reads MADSRDPASDQMKLWKEQRAAQ. The tract at residues 1-34 is disordered; the sequence is MADSRDPASDQMKLWKEQRAAQKPDVLTTGGGNP. Alanine 2 is modified (N-acetylalanine). The residue at position 9 (serine 9) is a Phosphoserine. N6-succinyllysine is present on lysine 13. Residues histidine 75 and asparagine 148 contribute to the active site. 4 residues coordinate NADP(+): histidine 194, serine 201, arginine 203, and asparagine 213. The residue at position 221 (lysine 221) is an N6-succinyllysine. Lysine 233 is modified (N6-acetyllysine). 3 residues coordinate NADP(+): lysine 237, tryptophan 303, and histidine 305. Tyrosine 358 serves as a coordination point for heme. Residues serine 422 and serine 434 each carry the phosphoserine modification. Lysine 449 and lysine 480 each carry N6-acetyllysine; alternate. Lysine 449 and lysine 480 each carry N6-succinyllysine; alternate. At lysine 499 the chain carries N6-acetyllysine. A Phosphothreonine modification is found at threonine 511. Serine 517 carries the post-translational modification Phosphoserine. The Microbody targeting signal; atypical motif lies at 524–527; that stretch reads KANL.

This sequence belongs to the catalase family. Homotetramer. Interacts (via microbody targeting signal) with PEX5, monomeric form interacts with PEX5, leading to its translocation into peroxisomes. Heme is required as a cofactor. The cofactor is NADP(+).

Its subcellular location is the peroxisome matrix. It carries out the reaction 2 H2O2 = O2 + 2 H2O. In terms of biological role, catalyzes the degradation of hydrogen peroxide (H(2)O(2)) generated by peroxisomal oxidases to water and oxygen, thereby protecting cells from the toxic effects of hydrogen peroxide. Promotes growth of cells including T-cells, B-cells, myeloid leukemia cells, melanoma cells, mastocytoma cells and normal and transformed fibroblast cells. In Canis lupus familiaris (Dog), this protein is Catalase (CAT).